The chain runs to 166 residues: Lipoprotein signal peptidase (166 aa).

3 helical membrane passes run 12 to 32 (WLWLVVVVLIIDLGSKYLILQ), 70 to 90 (WFFAGIAIGICVILLVMMYRS), and 102 to 122 (ALIIGGALGNLFDRLWHGFVV). Residues aspartate 123 and aspartate 141 contribute to the active site. The chain crosses the membrane as a helical span at residues 137 to 157 (FNLADSAICIGAALIVLEGFL).

This sequence belongs to the peptidase A8 family.

It localises to the cell inner membrane. It carries out the reaction Release of signal peptides from bacterial membrane prolipoproteins. Hydrolyzes -Xaa-Yaa-Zaa-|-(S,diacylglyceryl)Cys-, in which Xaa is hydrophobic (preferably Leu), and Yaa (Ala or Ser) and Zaa (Gly or Ala) have small, neutral side chains.. The protein operates within protein modification; lipoprotein biosynthesis (signal peptide cleavage). Functionally, this protein specifically catalyzes the removal of signal peptides from prolipoproteins. This Salmonella choleraesuis (strain SC-B67) protein is Lipoprotein signal peptidase.